Consider the following 142-residue polypeptide: Metallothiol transferase FosB (142 aa).

Residues Asn-5–Gly-120 form the VOC domain. Positions 8, 67, and 116 each coordinate Mg(2+). The active-site Proton donor/acceptor is the Glu-116.

Belongs to the fosfomycin resistance protein family. FosB subfamily. In terms of assembly, homodimer. The cofactor is Mg(2+).

The protein resides in the cytoplasm. In terms of biological role, metallothiol transferase which confers resistance to fosfomycin by catalyzing the addition of a thiol cofactor to fosfomycin. L-cysteine is probably the physiological thiol donor. This is Metallothiol transferase FosB from Staphylococcus epidermidis (strain ATCC 35984 / DSM 28319 / BCRC 17069 / CCUG 31568 / BM 3577 / RP62A).